Reading from the N-terminus, the 410-residue chain is Chaperone protein dnaJ 15 (410 aa).

In terms of domain architecture, J spans 17–82 (DPYEVLCVSK…EKRRHYDNAG (66 aa)). Residues 284-344 (AKTYEDTTEK…TVDELLKQRD (61 aa)) are a coiled coil. A disordered region spans residues 351-410 (SVVKTPSGNNLSNGSSSKAQGDESKGDGDSAGEEGGTENRDKSKRKWFNLNLKGSDKKLG). A compositionally biased stretch (low complexity) spans 357–367 (SGNNLSNGSSS).

The protein belongs to the DnaJ family. B/II subfamily. Expressed at high levels in root cap, root tip meristematic region and elongation zones, and at lower levels in mature part of roots (at protein level). Constitutively expressed in seedlings, etiolated or not, roots, rosette leaves, cauline leaves, stems, flowers, siliques and pollen.

The protein localises to the cytoplasm. It localises to the cytoskeleton. It is found in the endoplasmic reticulum membrane. The protein resides in the golgi apparatus membrane. In terms of biological role, plays a continuous role in plant development probably in the structural organization of compartments. Seems to be involved in early gravitropic signal transduction within the gravity-perceiving cells (statocytes), where it influences pH changes and auxin distribution. Probably affects the localization and/or activity of auxin efflux carrier components (PIN proteins) or other proteins involved in lateral auxin transport. In Arabidopsis thaliana (Mouse-ear cress), this protein is Chaperone protein dnaJ 15 (ATJ15).